A 633-amino-acid chain; its full sequence is Threonine--tRNA ligase (633 aa).

The TGS domain occupies 1 to 61 (MINIYFNNNL…TENCTFEVIT (61 aa)). Residues 242-533 (DHRKIGKELE…LIEHHSGKFP (292 aa)) form a catalytic region. Positions 333, 384, and 510 each coordinate Zn(2+).

The protein belongs to the class-II aminoacyl-tRNA synthetase family. Homodimer. The cofactor is Zn(2+).

The protein resides in the cytoplasm. The catalysed reaction is tRNA(Thr) + L-threonine + ATP = L-threonyl-tRNA(Thr) + AMP + diphosphate + H(+). In terms of biological role, catalyzes the attachment of threonine to tRNA(Thr) in a two-step reaction: L-threonine is first activated by ATP to form Thr-AMP and then transferred to the acceptor end of tRNA(Thr). Also edits incorrectly charged L-seryl-tRNA(Thr). This chain is Threonine--tRNA ligase, found in Ehrlichia canis (strain Jake).